A 161-amino-acid chain; its full sequence is MPADLHPDLDALAPLLGTWAGQGSGEYPTIEPFEYLEEVVFSHVGKPFLVYAQKTRAVADGAPLHAETGYLRVPKPGQVELVLAHPSGITEIEVGTYSASGGVIEMEMVTTAIGMTPTAKEVTALSRSFRMVGDELSYRLRMGAVGLPLQHHLGARLRRKS.

The GXWXGXG signature appears at 17 to 23 (GTWAGQG). His152 serves as a coordination point for heme b.

The protein belongs to the nitrobindin family. As to quaternary structure, homodimer. Requires heme b as cofactor.

The enzyme catalyses peroxynitrite = nitrate. The protein operates within nitrogen metabolism. Functionally, heme-binding protein able to scavenge peroxynitrite and to protect free L-tyrosine against peroxynitrite-mediated nitration, by acting as a peroxynitrite isomerase that converts peroxynitrite to nitrate. Therefore, this protein likely plays a role in peroxynitrite sensing and in the detoxification of reactive nitrogen and oxygen species (RNS and ROS, respectively). Is able to bind nitric oxide (NO) in vitro, but may act as a sensor of peroxynitrite levels in vivo. This Mycobacterium marinum (strain ATCC BAA-535 / M) protein is Peroxynitrite isomerase 2.